Reading from the N-terminus, the 512-residue chain is Maturase K (512 aa).

The protein belongs to the intron maturase 2 family. MatK subfamily.

Its subcellular location is the plastid. The protein resides in the chloroplast. Its function is as follows. Usually encoded in the trnK tRNA gene intron. Probably assists in splicing its own and other chloroplast group II introns. In Amorphophallus paeoniifolius (Whitespot giant arum), this protein is Maturase K.